Consider the following 141-residue polypeptide: MVKRGRFALCLAVLLGACSFSSIPNGTYRATYQDFDENGWKDFLEVTFDGGKMVQVVYDYQHKEGRFKSQDADYHRVMYASSGIGPEKAFRELADALLEKGNPEMVDVVTGATVSSQSFRRLGRALLQSARRGEKEAIISR.

An N-terminal signal peptide occupies residues 1 to 17 (MVKRGRFALCLAVLLGA). A lipid anchor (N-palmitoyl cysteine) is attached at Cys-18. Cys-18 carries S-diacylglycerol cysteine lipidation.

The protein resides in the cell membrane. The polypeptide is 15 kDa lipoprotein (tpp15) (Treponema pallidum (strain Nichols)).